Reading from the N-terminus, the 167-residue chain is Small ribosomal subunit protein uS5 (167 aa).

The 64-residue stretch at 12 to 75 (LEDQVVSINR…DAAKKSLIEV (64 aa)) folds into the S5 DRBM domain.

Belongs to the universal ribosomal protein uS5 family. As to quaternary structure, part of the 30S ribosomal subunit. Contacts proteins S4 and S8.

With S4 and S12 plays an important role in translational accuracy. In terms of biological role, located at the back of the 30S subunit body where it stabilizes the conformation of the head with respect to the body. This is Small ribosomal subunit protein uS5 from Lacticaseibacillus paracasei (strain ATCC 334 / BCRC 17002 / CCUG 31169 / CIP 107868 / KCTC 3260 / NRRL B-441) (Lactobacillus paracasei).